The primary structure comprises 441 residues: Enolase (441 aa).

Gln164 provides a ligand contact to (2R)-2-phosphoglycerate. The active-site Proton donor is Glu206. 3 residues coordinate Mg(2+): Asp243, Glu289, and Asp316. (2R)-2-phosphoglycerate contacts are provided by Lys341, Arg370, Ser371, and Lys392. The Proton acceptor role is filled by Lys341.

It belongs to the enolase family. Mg(2+) is required as a cofactor.

Its subcellular location is the cytoplasm. The protein localises to the secreted. It localises to the cell surface. It carries out the reaction (2R)-2-phosphoglycerate = phosphoenolpyruvate + H2O. The protein operates within carbohydrate degradation; glycolysis; pyruvate from D-glyceraldehyde 3-phosphate: step 4/5. In terms of biological role, catalyzes the reversible conversion of 2-phosphoglycerate (2-PG) into phosphoenolpyruvate (PEP). It is essential for the degradation of carbohydrates via glycolysis. In Leuconostoc mesenteroides subsp. mesenteroides (strain ATCC 8293 / DSM 20343 / BCRC 11652 / CCM 1803 / JCM 6124 / NCDO 523 / NBRC 100496 / NCIMB 8023 / NCTC 12954 / NRRL B-1118 / 37Y), this protein is Enolase.